The sequence spans 363 residues: S-adenosylmethionine:tRNA ribosyltransferase-isomerase (363 aa).

This sequence belongs to the QueA family. Monomer.

It is found in the cytoplasm. The catalysed reaction is 7-aminomethyl-7-carbaguanosine(34) in tRNA + S-adenosyl-L-methionine = epoxyqueuosine(34) in tRNA + adenine + L-methionine + 2 H(+). It participates in tRNA modification; tRNA-queuosine biosynthesis. Transfers and isomerizes the ribose moiety from AdoMet to the 7-aminomethyl group of 7-deazaguanine (preQ1-tRNA) to give epoxyqueuosine (oQ-tRNA). The polypeptide is S-adenosylmethionine:tRNA ribosyltransferase-isomerase (Magnetococcus marinus (strain ATCC BAA-1437 / JCM 17883 / MC-1)).